A 151-amino-acid polypeptide reads, in one-letter code: Ubiquitin-like protein 4A-B (151 aa).

Positions 1 to 76 (MILTIKPLQG…LNLVVRPAGE (76 aa)) constitute a Ubiquitin-like domain.

Component of the BAT3 complex.

Its subcellular location is the cytoplasm. It is found in the cytosol. Functionally, component of the BAT3 complex, a multiprotein complex involved in the post-translational delivery of tail-anchored (TA) membrane proteins to the endoplasmic reticulum membrane. TA membrane proteins, also named type II transmembrane proteins, contain a single C-terminal transmembrane region. The chain is Ubiquitin-like protein 4A-B (ubl4ab) from Salmo salar (Atlantic salmon).